A 259-amino-acid chain; its full sequence is Protein CDI (259 aa).

Residues 236 to 259 (FADLWLNEMEEYNKENKKEADNAK) adopt a coiled-coil conformation.

In terms of tissue distribution, mostly expressed in pollen grains and pollen tubes, and, at low levels, in seedlings, roots, stems, leaves, flowers and siliques.

The protein resides in the cytoplasm. The protein localises to the cytosol. Its function is as follows. Probable nucleotide-diphospho-sugar transferase required for pollen germination and tube growth. The polypeptide is Protein CDI (Arabidopsis thaliana (Mouse-ear cress)).